The chain runs to 475 residues: Ankyrin repeat, SAM and basic leucine zipper domain-containing protein 1 (475 aa).

The disordered stretch occupies residues 1–24 (MAGSLGNLVVAGGGESSDSEEDYW). Residues Ser-16, Ser-17, and Ser-19 each carry the phosphoserine modification. 6 ANK repeats span residues 44 to 73 (ERDE…SVES), 77 to 106 (FGWT…NASF), 109 to 146 (DQYT…VACR), 147 to 176 (KCMT…EINA), 180 to 209 (NGYT…NKTI), and 213 to 242 (DGKT…PLQG). Positions 273-336 (TAFGDLEVFL…LDAVKELQVE (64 aa)) constitute an SAM domain.

As to quaternary structure, interacts with DDX4, PIWIL1, RANBP9 and TDRD1.

It is found in the cytoplasm. In terms of biological role, plays a central role during spermatogenesis by repressing transposable elements and preventing their mobilization, which is essential for the germline integrity. Acts via the piRNA metabolic process, which mediates the repression of transposable elements during meiosis by forming complexes composed of piRNAs and Piwi proteins and governs the methylation and subsequent repression of transposons. Its association with pi-bodies suggests a participation in the primary piRNAs metabolic process. Required prior to the pachytene stage to facilitate the production of multiple types of piRNAs, including those associated with repeats involved in the regulation of retrotransposons. May act by mediating protein-protein interactions during germ cell maturation. This chain is Ankyrin repeat, SAM and basic leucine zipper domain-containing protein 1 (ASZ1), found in Notamacropus eugenii (Tammar wallaby).